The chain runs to 196 residues: UPF0319 protein VV1_0237 (196 aa).

The signal sequence occupies residues Met-1–Ala-19.

Belongs to the UPF0319 family.

The chain is UPF0319 protein VV1_0237 from Vibrio vulnificus (strain CMCP6).